We begin with the raw amino-acid sequence, 457 residues long: tRNA-2-methylthio-N(6)-dimethylallyladenosine synthase (457 aa).

Residues K18–A133 form the MTTase N-terminal domain. C27, C63, C97, C171, C175, and C178 together coordinate [4Fe-4S] cluster. Residues C157–E390 enclose the Radical SAM core domain. Residues N393 to F456 form the TRAM domain.

It belongs to the methylthiotransferase family. MiaB subfamily. Monomer. [4Fe-4S] cluster is required as a cofactor.

The protein localises to the cytoplasm. The enzyme catalyses N(6)-dimethylallyladenosine(37) in tRNA + (sulfur carrier)-SH + AH2 + 2 S-adenosyl-L-methionine = 2-methylsulfanyl-N(6)-dimethylallyladenosine(37) in tRNA + (sulfur carrier)-H + 5'-deoxyadenosine + L-methionine + A + S-adenosyl-L-homocysteine + 2 H(+). Catalyzes the methylthiolation of N6-(dimethylallyl)adenosine (i(6)A), leading to the formation of 2-methylthio-N6-(dimethylallyl)adenosine (ms(2)i(6)A) at position 37 in tRNAs that read codons beginning with uridine. This is tRNA-2-methylthio-N(6)-dimethylallyladenosine synthase from Bacteroides fragilis (strain ATCC 25285 / DSM 2151 / CCUG 4856 / JCM 11019 / LMG 10263 / NCTC 9343 / Onslow / VPI 2553 / EN-2).